We begin with the raw amino-acid sequence, 356 residues long: 5-formaminoimidazole-4-carboxamide-1-(beta)-D-ribofuranosyl 5'-monophosphate synthetase (356 aa).

Residues His27 and Ser94 each coordinate 5-amino-1-(5-phospho-beta-D-ribosyl)imidazole-4-carboxamide. The ATP-grasp domain occupies 101 to 333 (TENFADMAVP…YADLMEENLS (233 aa)). Residues 145–196 (PHDI…TRYY) and Glu226 each bind ATP. Asn255 is a binding site for 5-amino-1-(5-phospho-beta-D-ribosyl)imidazole-4-carboxamide. Residues Glu293 and Glu306 each coordinate Mg(2+).

It belongs to the phosphohexose mutase family. Requires Mg(2+) as cofactor. The cofactor is Mn(2+).

It catalyses the reaction 5-amino-1-(5-phospho-beta-D-ribosyl)imidazole-4-carboxamide + formate + ATP = 5-formamido-1-(5-phospho-D-ribosyl)imidazole-4-carboxamide + ADP + phosphate. The protein operates within purine metabolism; IMP biosynthesis via de novo pathway; 5-formamido-1-(5-phospho-D-ribosyl)imidazole-4-carboxamide from 5-amino-1-(5-phospho-D-ribosyl)imidazole-4-carboxamide (formate route): step 1/1. Catalyzes the ATP- and formate-dependent formylation of 5-aminoimidazole-4-carboxamide-1-beta-d-ribofuranosyl 5'-monophosphate (AICAR) to 5-formaminoimidazole-4-carboxamide-1-beta-d-ribofuranosyl 5'-monophosphate (FAICAR) in the absence of folates. The protein is 5-formaminoimidazole-4-carboxamide-1-(beta)-D-ribofuranosyl 5'-monophosphate synthetase of Methanosarcina barkeri (strain Fusaro / DSM 804).